The sequence spans 309 residues: Taste receptor type 2 member 8 (309 aa).

At 1–7 (MFSPADN) the chain is on the extracellular side. A helical transmembrane segment spans residues 8–28 (IFIILITGEFILGILGNGYIA). The Cytoplasmic portion of the chain corresponds to 29–50 (LVNWIDWIKKKKISTTDYILTN). Residues 51-71 (LVISRICLISVIVVNGIVTVL) form a helical membrane-spanning segment. Over 72–82 (YPDVYTKSKLQ) the chain is Extracellular. A helical membrane pass occupies residues 83-103 (IAISTFWTFANYLNMWFTTCL). Residues 104 to 131 (NVFYFLKIANSSHPLFLWLKQKIDMVVR) are Cytoplasmic-facing. A helical membrane pass occupies residues 132-152 (WILLGCFAISLLVSLIIAIVL). Topologically, residues 153–184 (SRDYRFHAIAKHKRNITEMFHVSKMLYFEPLT) are extracellular. The N-linked (GlcNAc...) asparagine glycan is linked to Asn167. The helical transmembrane segment at 185 to 205 (LFNLLAIVPFIVSLMSFFLLV) threads the bilayer. The Cytoplasmic segment spans residues 206 to 239 (RSLQRHTKQIKLYATGGRDPSTEAHVRAIKTMTS). The helical transmembrane segment at 240 to 260 (FIFFFFLYYITSLLVTFSYLM) threads the bilayer. The Extracellular segment spans residues 261-266 (TKYKLA). The chain crosses the membrane as a helical span at residues 267 to 287 (MAFGEIVAILYPSGHSFILII). At 288–309 (LNNKLRQASVRMLTCIKITCVI) the chain is on the cytoplasmic side.

It belongs to the G-protein coupled receptor T2R family.

It is found in the membrane. Receptor that may play a role in the perception of bitterness and is gustducin-linked. May play a role in sensing the chemical composition of the gastrointestinal content. The activity of this receptor may stimulate alpha gustducin, mediate PLC-beta-2 activation and lead to the gating of TRPM5. This chain is Taste receptor type 2 member 8 (TAS2R8), found in Pongo pygmaeus (Bornean orangutan).